Consider the following 201-residue polypeptide: NADH-quinone oxidoreductase subunit C 1 (201 aa).

This sequence belongs to the complex I 30 kDa subunit family. As to quaternary structure, NDH-1 is composed of 14 different subunits. Subunits NuoB, C, D, E, F, and G constitute the peripheral sector of the complex.

Its subcellular location is the cell inner membrane. It catalyses the reaction a quinone + NADH + 5 H(+)(in) = a quinol + NAD(+) + 4 H(+)(out). NDH-1 shuttles electrons from NADH, via FMN and iron-sulfur (Fe-S) centers, to quinones in the respiratory chain. The immediate electron acceptor for the enzyme in this species is believed to be ubiquinone. Couples the redox reaction to proton translocation (for every two electrons transferred, four hydrogen ions are translocated across the cytoplasmic membrane), and thus conserves the redox energy in a proton gradient. The polypeptide is NADH-quinone oxidoreductase subunit C 1 (Rhizobium meliloti (strain 1021) (Ensifer meliloti)).